The sequence spans 1252 residues: DNA-directed RNA polymerase subunit beta (1252 aa).

It belongs to the RNA polymerase beta chain family. In terms of assembly, the RNAP catalytic core consists of 2 alpha, 1 beta, 1 beta' and 1 omega subunit. When a sigma factor is associated with the core the holoenzyme is formed, which can initiate transcription.

The enzyme catalyses RNA(n) + a ribonucleoside 5'-triphosphate = RNA(n+1) + diphosphate. Its function is as follows. DNA-dependent RNA polymerase catalyzes the transcription of DNA into RNA using the four ribonucleoside triphosphates as substrates. The chain is DNA-directed RNA polymerase subunit beta from Chlamydia muridarum (strain MoPn / Nigg).